An 815-amino-acid polypeptide reads, in one-letter code: Probable inorganic carbon transporter subunit DabA (815 aa).

Positions 334, 336, 507, and 522 each coordinate Zn(2+).

Belongs to the inorganic carbon transporter (TC 9.A.2) DabA family. Forms a complex with DabB. It depends on Zn(2+) as a cofactor.

It is found in the cell inner membrane. Its function is as follows. Part of an energy-coupled inorganic carbon pump. The sequence is that of Probable inorganic carbon transporter subunit DabA from Ectopseudomonas mendocina (strain ymp) (Pseudomonas mendocina).